The primary structure comprises 231 residues: Large ribosomal subunit protein uL1 (231 aa).

Belongs to the universal ribosomal protein uL1 family. In terms of assembly, part of the 50S ribosomal subunit.

In terms of biological role, binds directly to 23S rRNA. The L1 stalk is quite mobile in the ribosome, and is involved in E site tRNA release. Functionally, protein L1 is also a translational repressor protein, it controls the translation of the L11 operon by binding to its mRNA. In Staphylococcus epidermidis (strain ATCC 35984 / DSM 28319 / BCRC 17069 / CCUG 31568 / BM 3577 / RP62A), this protein is Large ribosomal subunit protein uL1.